We begin with the raw amino-acid sequence, 278 residues long: Sulfide dehydrogenase subunit beta (278 aa).

A propeptide spanning residues 1 to 4 (MFKI) is cleaved from the precursor. The FAD-binding FR-type domain occupies 1-95 (MFKILRKERL…LGPLGKPSHI (95 aa)). [2Fe-2S] cluster contacts are provided by C222, C225, and C237.

As to quaternary structure, heterodimer of alpha and beta subunits. FAD serves as cofactor. Requires [2Fe-2S] cluster as cofactor.

The protein resides in the cytoplasm. It catalyses the reaction n sulfur + hydrogen sulfide + NADP(+) = (n+1) sulfur + NADPH. It carries out the reaction 2 reduced [2Fe-2S]-[ferredoxin] + NADP(+) + H(+) = 2 oxidized [2Fe-2S]-[ferredoxin] + NADPH. In terms of biological role, a bifunctional enzyme that catalyzes the reduction of elemental sulfur or polysulfide to hydrogen sulfide with NADPH as electron donor. Also functions as a reduced ferredoxin:NADP oxidoreductase with a very high affinity for reduced ferredoxin. Exhibits a broad specificity for various physiological and non-physiological substrates with varied reduction potentials such as methyl viologen, benzyl viologen, FAD, FMN, methylene blue, 2,6-dichlorophenolindophenol (DCIP), cytochrome C and ferricyanide with highest preference for benzyl viologen. Does not reduce fumarate, succinate, nitrate, nitrite, sulfate, sulfite or protons. Does not possess any hydrogenase activity or NADPH-dependent glutamate synthase activity. In Pyrococcus furiosus (strain ATCC 43587 / DSM 3638 / JCM 8422 / Vc1), this protein is Sulfide dehydrogenase subunit beta.